We begin with the raw amino-acid sequence, 217 residues long: Probable transaldolase (217 aa).

K83 serves as the catalytic Schiff-base intermediate with substrate.

This sequence belongs to the transaldolase family. Type 3B subfamily.

It localises to the cytoplasm. The enzyme catalyses D-sedoheptulose 7-phosphate + D-glyceraldehyde 3-phosphate = D-erythrose 4-phosphate + beta-D-fructose 6-phosphate. The protein operates within carbohydrate degradation; pentose phosphate pathway; D-glyceraldehyde 3-phosphate and beta-D-fructose 6-phosphate from D-ribose 5-phosphate and D-xylulose 5-phosphate (non-oxidative stage): step 2/3. Transaldolase is important for the balance of metabolites in the pentose-phosphate pathway. This Hydrogenobaculum sp. (strain Y04AAS1) protein is Probable transaldolase.